A 617-amino-acid polypeptide reads, in one-letter code: Probable translation initiation factor IF-2 (617 aa).

Residues 14 to 231 enclose the tr-type G domain; sequence LRQPIVVVLG…VLAGLTQTYL (218 aa). The G1 stretch occupies residues 23-30; sequence GHVDHGKT. A GTP-binding site is contributed by 23–30; the sequence is GHVDHGKT. Residues 48-52 are G2; it reads GITQH. The G3 stretch occupies residues 87-90; that stretch reads DTPG. GTP contacts are provided by residues 87–91 and 141–144; these read DTPGH and NKID. Positions 141–144 are G4; the sequence is NKID. The tract at residues 209-211 is G5; it reads SAR.

The protein belongs to the TRAFAC class translation factor GTPase superfamily. Classic translation factor GTPase family. IF-2 subfamily.

Its function is as follows. Function in general translation initiation by promoting the binding of the formylmethionine-tRNA to ribosomes. Seems to function along with eIF-2. The chain is Probable translation initiation factor IF-2 (infB) from Aeropyrum pernix (strain ATCC 700893 / DSM 11879 / JCM 9820 / NBRC 100138 / K1).